A 63-amino-acid chain; its full sequence is Large ribosomal subunit protein bL28 (63 aa).

This sequence belongs to the bacterial ribosomal protein bL28 family.

The protein is Large ribosomal subunit protein bL28 of Solibacter usitatus (strain Ellin6076).